A 239-amino-acid chain; its full sequence is Ribose-5-phosphate isomerase A (239 aa).

Substrate is bound by residues 39–42, 95–98, and 108–111; these read SGST, DGAD, and KGGG. The active-site Proton acceptor is the Glu-117. Substrate is bound at residue Lys-135.

The protein belongs to the ribose 5-phosphate isomerase family. In terms of assembly, homodimer.

The enzyme catalyses aldehydo-D-ribose 5-phosphate = D-ribulose 5-phosphate. It functions in the pathway carbohydrate degradation; pentose phosphate pathway; D-ribose 5-phosphate from D-ribulose 5-phosphate (non-oxidative stage): step 1/1. In terms of biological role, catalyzes the reversible conversion of ribose-5-phosphate to ribulose 5-phosphate. The sequence is that of Ribose-5-phosphate isomerase A from Chlamydia muridarum (strain MoPn / Nigg).